Consider the following 830-residue polypeptide: Formin-like protein 14 (830 aa).

The signal sequence occupies residues 1–34 (MAMAMAMPSSSPPLFFSLLNLMLLLLLLAPYCSA). Positions 40–59 (NNTHHRSSSPTQTTLQQLHS) are enriched in polar residues. Residues 40 to 195 (NNTHHRSSSP…NISTLVHPTQ (156 aa)) form a disordered region. Pro residues-rich tracts occupy residues 61–86 (DSPP…PAPR) and 95–135 (PPPP…PTPK). The span at 149–160 (YPFTNYPFFPNF) shows a compositional bias: low complexity. A helical transmembrane segment spans residues 203 to 223 (VLQALLLSFLSLCLLLLSALL). A disordered region spans residues 235 to 446 (HHSHSHPNAR…LHSDKLKPGS (212 aa)). Residues 314–323 (RPLPPLPRVG) show a composition bias toward pro residues. A compositionally biased stretch (low complexity) spans 324–369 (PPSGEFASRSSASDPSTAPPAAAEASSSSLSPSSPSASSPTLGSSP). In terms of domain architecture, FH2 spans 390-823 (PKRRPQPPEP…MMGRDWNMAA (434 aa)). Residues 424 to 446 (HSPSEKSMRKSRPLHSDKLKPGS) show a composition bias toward basic and acidic residues.

It belongs to the formin-like family. Class-I subfamily.

Its subcellular location is the membrane. The sequence is that of Formin-like protein 14 (FH14) from Oryza sativa subsp. japonica (Rice).